Consider the following 295-residue polypeptide: UDP-3-O-acyl-N-acetylglucosamine deacetylase (295 aa).

Residues His-75, His-232, and Asp-236 each contribute to the Zn(2+) site. Residue His-259 is the Proton donor of the active site.

The protein belongs to the LpxC family. Zn(2+) is required as a cofactor.

It carries out the reaction a UDP-3-O-[(3R)-3-hydroxyacyl]-N-acetyl-alpha-D-glucosamine + H2O = a UDP-3-O-[(3R)-3-hydroxyacyl]-alpha-D-glucosamine + acetate. It participates in glycolipid biosynthesis; lipid IV(A) biosynthesis; lipid IV(A) from (3R)-3-hydroxytetradecanoyl-[acyl-carrier-protein] and UDP-N-acetyl-alpha-D-glucosamine: step 2/6. Catalyzes the hydrolysis of UDP-3-O-myristoyl-N-acetylglucosamine to form UDP-3-O-myristoylglucosamine and acetate, the committed step in lipid A biosynthesis. This chain is UDP-3-O-acyl-N-acetylglucosamine deacetylase, found in Helicobacter pylori (strain ATCC 700392 / 26695) (Campylobacter pylori).